The chain runs to 230 residues: 2-C-methyl-D-erythritol 4-phosphate cytidylyltransferase (230 aa).

It belongs to the IspD/TarI cytidylyltransferase family. IspD subfamily.

The enzyme catalyses 2-C-methyl-D-erythritol 4-phosphate + CTP + H(+) = 4-CDP-2-C-methyl-D-erythritol + diphosphate. It functions in the pathway isoprenoid biosynthesis; isopentenyl diphosphate biosynthesis via DXP pathway; isopentenyl diphosphate from 1-deoxy-D-xylulose 5-phosphate: step 2/6. Catalyzes the formation of 4-diphosphocytidyl-2-C-methyl-D-erythritol from CTP and 2-C-methyl-D-erythritol 4-phosphate (MEP). This chain is 2-C-methyl-D-erythritol 4-phosphate cytidylyltransferase, found in Nocardia farcinica (strain IFM 10152).